The primary structure comprises 447 residues: NADH-ubiquinone oxidoreductase chain 4 (447 aa).

The next 13 helical transmembrane spans lie at 28–48, 56–76, 89–109, 110–130, 141–161, 183–203, 213–233, 246–266, 273–293, 298–318, 331–351, 374–394, and 409–431; these read IFLL…FNYI, MVSY…LMAS, FVFM…SMSV, FMFY…ILGW, VYLL…IFYI, LLYL…LVHL, PVSG…YGLL, YNYW…LVCL, ALIA…LLTM, LTGS…LFCL, LLIN…WFLL, IVSW…FSAA, and YSGV…LHWL.

The protein belongs to the complex I subunit 4 family.

It localises to the mitochondrion membrane. It catalyses the reaction a ubiquinone + NADH + 5 H(+)(in) = a ubiquinol + NAD(+) + 4 H(+)(out). Core subunit of the mitochondrial membrane respiratory chain NADH dehydrogenase (Complex I) that is believed to belong to the minimal assembly required for catalysis. Complex I functions in the transfer of electrons from NADH to the respiratory chain. The immediate electron acceptor for the enzyme is believed to be ubiquinone. In Anopheles gambiae (African malaria mosquito), this protein is NADH-ubiquinone oxidoreductase chain 4 (mt:ND4).